Here is a 493-residue protein sequence, read N- to C-terminus: C2H2-type transcription factor ffmA (493 aa).

A compositionally biased stretch (low complexity) spans 1-18; it reads MPMPQYTMQPQYPVSQPH. Disordered stretches follow at residues 1 to 50, 68 to 140, and 164 to 202; these read MPMP…SRYP, TTVG…YPDG, and EPPR…KNTT. Polar residues-rich tracts occupy residues 69–79 and 192–202; these read TVGSLPPSTFL and NGVNGTAKNTT. Residues 212–234 form a C2H2-type 1 zinc finger; sequence FPCPHCNKTYLHAKHLKRHLLRH. The C2H2-type 2; degenerate zinc-finger motif lies at 240-265; that stretch reads YMCVLCKDTFSRSDILKRHFQKCSIR. 2 stretches are compositionally biased toward polar residues: residues 288 to 307 and 484 to 493; these read QAAA…TVPP and ASTTLGGDGK. Disordered stretches follow at residues 288-316 and 468-493; these read QAAA…GATF and TTTA…GDGK.

It belongs to the krueppel C2H2-type zinc-finger protein family.

Its subcellular location is the nucleus. Its function is as follows. Transcription factor that acts in coordination with atrR to regulate the expression of the ABC-type multidrug transporter abcG1 and thus plays a role in azole susceptibility. Regulates the expression of genes involved in fermentation. Is able to promote expression from the yeast FLO11 promoter. The protein is C2H2-type transcription factor ffmA of Aspergillus fumigatus (strain CBS 144.89 / FGSC A1163 / CEA10) (Neosartorya fumigata).